We begin with the raw amino-acid sequence, 128 residues long: Disintegrin EO4A (128 aa).

The first 20 residues, 1–20 (MIPVLLVTICLAVFPFQGSS), serve as a signal peptide directing secretion. Residues 21-47 (IILESGNINDYEIVYPKKVNVLPTGAM) constitute a propeptide that is removed on maturation. Residues 26–112 (GNINDYEIVY…DCPRNPYKGK (87 aa)) enclose the Disintegrin domain. Disulfide bonds link Cys53–Cys76, Cys67–Cys73, Cys72–Cys97, and Cys85–Cys104. Positions 89–91 (RGD) match the Cell attachment site motif. The propeptide occupies 115-128 (PMKWPAAAKGSVLM).

Belongs to the disintegrin family. Dimeric disintegrin subfamily. In terms of assembly, heterodimer with EO5B; disulfide-linked. Expressed by the venom gland.

Its subcellular location is the secreted. Its function is as follows. Poor inhibitor of platelet aggregation. The disintegrin inhibits the adhesion of cells expressing the RGD-dependent integrin alpha-5/beta-1 (ITGA5/ITGB1) to immobilized fibronectin. Inhibition on alpha-2b/beta-3 (ITGA2B/ITGB3) is low. In Echis ocellatus (Ocellated saw-scaled viper), this protein is Disintegrin EO4A.